The chain runs to 342 residues: Holliday junction branch migration complex subunit RuvB (342 aa).

Positions 1 to 185 are large ATPase domain (RuvB-L); that stretch reads MTVKPLRDVT…FPIQERLEYY (185 aa). ATP contacts are provided by residues L24, R25, G66, K69, T70, S71, 132–134, R175, Y185, and R222; that span reads EDY. A Mg(2+)-binding site is contributed by T70. Positions 186 to 256 are small ATPAse domain (RuvB-S); the sequence is GPAELKEIAV…VVDRTLRRLE (71 aa). Residues 259-342 form a head domain (RuvB-H) region; it reads ARGLDAMDRR…RSGGKQGSLV (84 aa). Residues R314 and R319 each contribute to the DNA site.

This sequence belongs to the RuvB family. As to quaternary structure, homohexamer. Forms an RuvA(8)-RuvB(12)-Holliday junction (HJ) complex. HJ DNA is sandwiched between 2 RuvA tetramers; dsDNA enters through RuvA and exits via RuvB. An RuvB hexamer assembles on each DNA strand where it exits the tetramer. Each RuvB hexamer is contacted by two RuvA subunits (via domain III) on 2 adjacent RuvB subunits; this complex drives branch migration. In the full resolvosome a probable DNA-RuvA(4)-RuvB(12)-RuvC(2) complex forms which resolves the HJ.

Its subcellular location is the cytoplasm. It catalyses the reaction ATP + H2O = ADP + phosphate + H(+). Its function is as follows. The RuvA-RuvB-RuvC complex processes Holliday junction (HJ) DNA during genetic recombination and DNA repair, while the RuvA-RuvB complex plays an important role in the rescue of blocked DNA replication forks via replication fork reversal (RFR). RuvA specifically binds to HJ cruciform DNA, conferring on it an open structure. The RuvB hexamer acts as an ATP-dependent pump, pulling dsDNA into and through the RuvAB complex. RuvB forms 2 homohexamers on either side of HJ DNA bound by 1 or 2 RuvA tetramers; 4 subunits per hexamer contact DNA at a time. Coordinated motions by a converter formed by DNA-disengaged RuvB subunits stimulates ATP hydrolysis and nucleotide exchange. Immobilization of the converter enables RuvB to convert the ATP-contained energy into a lever motion, pulling 2 nucleotides of DNA out of the RuvA tetramer per ATP hydrolyzed, thus driving DNA branch migration. The RuvB motors rotate together with the DNA substrate, which together with the progressing nucleotide cycle form the mechanistic basis for DNA recombination by continuous HJ branch migration. Branch migration allows RuvC to scan DNA until it finds its consensus sequence, where it cleaves and resolves cruciform DNA. The sequence is that of Holliday junction branch migration complex subunit RuvB from Anaeromyxobacter dehalogenans (strain 2CP-C).